We begin with the raw amino-acid sequence, 183 residues long: Orotate phosphoribosyltransferase (183 aa).

5-phospho-alpha-D-ribose 1-diphosphate is bound by residues arginine 21, lysine 88, and 112–120 (EDVVTTGES). Orotate-binding residues include threonine 116 and arginine 144.

This sequence belongs to the purine/pyrimidine phosphoribosyltransferase family. PyrE subfamily. Homodimer. Requires Mg(2+) as cofactor.

The catalysed reaction is orotidine 5'-phosphate + diphosphate = orotate + 5-phospho-alpha-D-ribose 1-diphosphate. Its pathway is pyrimidine metabolism; UMP biosynthesis via de novo pathway; UMP from orotate: step 1/2. Its function is as follows. Catalyzes the transfer of a ribosyl phosphate group from 5-phosphoribose 1-diphosphate to orotate, leading to the formation of orotidine monophosphate (OMP). This chain is Orotate phosphoribosyltransferase, found in Thermus thermophilus (strain ATCC 27634 / DSM 579 / HB8).